A 426-amino-acid polypeptide reads, in one-letter code: Histidine--tRNA ligase (426 aa).

It belongs to the class-II aminoacyl-tRNA synthetase family.

The protein resides in the cytoplasm. It catalyses the reaction tRNA(His) + L-histidine + ATP = L-histidyl-tRNA(His) + AMP + diphosphate + H(+). The polypeptide is Histidine--tRNA ligase (Saccharolobus islandicus (strain M.16.27) (Sulfolobus islandicus)).